An 856-amino-acid chain; its full sequence is FO synthase (856 aa).

Radical SAM core domains follow at residues 84 to 336 (ISYS…APPN) and 544 to 785 (VTFV…SHIQ). Residues 85–417 (SYSRKVFIPV…PRVRGHVVAL (333 aa)) form a cofG-like region. [4Fe-4S] cluster is bound by residues Cys-98, Cys-102, Cys-105, Cys-558, Cys-562, and Cys-565. A cofH-like region spans residues 521–854 (DGPALEAVAA…RQRTTTYALL (334 aa)).

It in the N-terminal section; belongs to the radical SAM superfamily. CofG family. In the C-terminal section; belongs to the radical SAM superfamily. CofH family. Requires [4Fe-4S] cluster as cofactor.

The catalysed reaction is 5-amino-6-(D-ribitylamino)uracil + L-tyrosine + S-adenosyl-L-methionine = 5-amino-5-(4-hydroxybenzyl)-6-(D-ribitylimino)-5,6-dihydrouracil + 2-iminoacetate + 5'-deoxyadenosine + L-methionine + H(+). It carries out the reaction 5-amino-5-(4-hydroxybenzyl)-6-(D-ribitylimino)-5,6-dihydrouracil + S-adenosyl-L-methionine = 7,8-didemethyl-8-hydroxy-5-deazariboflavin + 5'-deoxyadenosine + L-methionine + NH4(+) + H(+). Its pathway is cofactor biosynthesis; coenzyme F0 biosynthesis. Its function is as follows. Catalyzes the radical-mediated synthesis of 7,8-didemethyl-8-hydroxy-5-deazariboflavin (FO) from 5-amino-6-(D-ribitylamino)uracil and L-tyrosine. The protein is FO synthase (fbiC) of Mycobacterium bovis (strain ATCC BAA-935 / AF2122/97).